A 243-amino-acid chain; its full sequence is UPF0246 protein Sez_1855 (243 aa).

The protein belongs to the UPF0246 family.

The sequence is that of UPF0246 protein Sez_1855 from Streptococcus equi subsp. zooepidemicus (strain MGCS10565).